Consider the following 510-residue polypeptide: Transcriptional regulatory protein GAT1 (510 aa).

Serine 167 carries the phosphoserine modification. The span at 220 to 256 (NHSHNSSHNNNSPSIANNTNANTNTNTSASTNTNSPL) shows a compositional bias: low complexity. 2 disordered regions span residues 220-311 (NHSH…IKCS) and 358-383 (QRSSTKINNNITPPPSSSLNPGAAGK). Serine 262 and serine 270 each carry phosphoserine. Basic residues predominate over residues 274–287 (SSVRKKKPALKKIK). Positions 294 to 306 (SSATPPSNTSSNP) are enriched in low complexity. A GATA-type zinc finger spans residues 310–334 (CSNCTTSTTPLWRKDPKGLPLCNAC). Threonine 369 carries the post-translational modification Phosphothreonine. Serine 399 and serine 418 each carry phosphoserine.

It is found in the nucleus. Positive regulator of multiple nitrogen catabolic genes. The protein is Transcriptional regulatory protein GAT1 (GAT1) of Saccharomyces cerevisiae (strain ATCC 204508 / S288c) (Baker's yeast).